We begin with the raw amino-acid sequence, 335 residues long: L-threo-3-deoxy-hexylosonate aldolase (335 aa).

Residue 50-51 (SN) coordinates substrate. Lys175 functions as the Schiff-base intermediate with substrate in the catalytic mechanism.

It belongs to the DapA family.

The enzyme catalyses 2-dehydro-3-deoxy-L-galactonate = L-glyceraldehyde + pyruvate. It participates in carbohydrate acid metabolism. In terms of biological role, mediates the conversion of 2-dehydro-3-deoxy-L-galactonate to pyruvate and L-glyceraldehyde in D-galacturonate catabolic process. This is L-threo-3-deoxy-hexylosonate aldolase (gaaC) from Aspergillus niger.